Here is a 303-residue protein sequence, read N- to C-terminus: Methionyl-tRNA formyltransferase (303 aa).

106–109 (SLLP) contributes to the (6S)-5,6,7,8-tetrahydrofolate binding site.

The protein belongs to the Fmt family.

It carries out the reaction L-methionyl-tRNA(fMet) + (6R)-10-formyltetrahydrofolate = N-formyl-L-methionyl-tRNA(fMet) + (6S)-5,6,7,8-tetrahydrofolate + H(+). Functionally, attaches a formyl group to the free amino group of methionyl-tRNA(fMet). The formyl group appears to play a dual role in the initiator identity of N-formylmethionyl-tRNA by promoting its recognition by IF2 and preventing the misappropriation of this tRNA by the elongation apparatus. The polypeptide is Methionyl-tRNA formyltransferase (Thermosipho melanesiensis (strain DSM 12029 / CIP 104789 / BI429)).